The following is a 138-amino-acid chain: Cofilin (138 aa).

Residues 2–136 (SSGVQPTQEC…TKDALFEKAT (135 aa)) enclose the ADF-H domain.

It belongs to the actin-binding proteins ADF family.

Its subcellular location is the cytoplasm. The protein resides in the cytoskeleton. It localises to the nucleus matrix. Functionally, controls reversibly actin polymerization and depolymerization in a pH-sensitive manner. It has the ability to bind G- and F-actin in a 1:1 ratio of cofilin to actin. Binding to F-actin is regulated by tropomyosin. It is the major component of intranuclear and cytoplasmic actin rods. Required for accumulation of actin at the cell division site via depolymerizing actin at the cell ends. In association with myosin II has a role in the assembly of the contractile ring via severing actin filaments. Involved in the maintenance of the contractile ring once formed. In association with profilin and capping protein, has a role in the mitotic reorganization of the actin cytoskeleton. The protein is Cofilin (COF1) of Cryptococcus neoformans var. neoformans serotype D (strain B-3501A) (Filobasidiella neoformans).